We begin with the raw amino-acid sequence, 258 residues long: Tryptophan synthase alpha chain (258 aa).

Catalysis depends on proton acceptor residues Glu52 and Asp63.

It belongs to the TrpA family. In terms of assembly, tetramer of two alpha and two beta chains.

It carries out the reaction (1S,2R)-1-C-(indol-3-yl)glycerol 3-phosphate + L-serine = D-glyceraldehyde 3-phosphate + L-tryptophan + H2O. It participates in amino-acid biosynthesis; L-tryptophan biosynthesis; L-tryptophan from chorismate: step 5/5. The alpha subunit is responsible for the aldol cleavage of indoleglycerol phosphate to indole and glyceraldehyde 3-phosphate. This chain is Tryptophan synthase alpha chain, found in Streptococcus pneumoniae (strain 70585).